The primary structure comprises 764 residues: Thyrotropin receptor (764 aa).

Residues 1–21 (MRPGSLLLLVLLLALSRSLRG) form the signal peptide. The Extracellular portion of the chain corresponds to 22 to 413 (KECASPPCEC…EFNPCEDIMG (392 aa)). The cysteines at positions 31 and 41 are disulfide-linked. Asn77 and Asn99 each carry an N-linked (GlcNAc...) asparagine glycan. LRR repeat units follow at residues 100 to 124 (LSKM…ALTE), 125 to 150 (LPLL…IYST), 151 to 174 (DIFF…AFQG), 176 to 199 (CNET…AFNG), 200 to 223 (TKLD…AFGG), 225 to 248 (YSGP…GLEH), and 264 to 288 (PLSL…AFKN). 2 N-linked (GlcNAc...) asparagine glycosylation sites follow: Asn177 and Asn198. Asn302 carries N-linked (GlcNAc...) asparagine glycosylation. Tyr385 is modified (sulfotyrosine). Residues 414 to 441 (YRFLRIVVWFVSLLALLGNIFVLLILLT) form a helical membrane-spanning segment. At 442-450 (SHYKLTVPR) the chain is on the cytoplasmic side. A helical transmembrane segment spans residues 451–473 (FLMCNLAFADFCMGVYLLLIASV). At 474 to 494 (DLYTHSEYYNHAIDWQTGPGC) the chain is on the extracellular side. A disulfide bridge connects residues Cys494 and Cys569. The chain crosses the membrane as a helical span at residues 495–517 (NTAGFFTVFASELSVYTLTVITL). Residues 518 to 537 (ERWYAITFAMRLDRKIRLRH) lie on the Cytoplasmic side of the membrane. The chain crosses the membrane as a helical span at residues 538-560 (AYTIMAGGWVSCFLLALLPMVGI). The Extracellular portion of the chain corresponds to 561-580 (SSYAKVSICLPMDTDTPLAL). The chain crosses the membrane as a helical span at residues 581-602 (AYIVLVLLLNVVAFVVVCSCYV). At 603–625 (KIYITVRNPQYNPRDKDTKIAKR) the chain is on the cytoplasmic side. Residues 626 to 649 (MAVLIFTDFMCMAPISFYALSALM) form a helical membrane-spanning segment. Over 650-660 (NKPLITVTNSK) the chain is Extracellular. A helical membrane pass occupies residues 661–682 (ILLVLFYPLNSCANPFLYAIFT). Residues 683-764 (KAFQRDVFIL…ISEEYKQTAL (82 aa)) lie on the Cytoplasmic side of the membrane. The PDZ-binding motif lies at 762 to 764 (TAL).

The protein belongs to the G-protein coupled receptor 1 family. FSH/LSH/TSH subfamily. In terms of assembly, interacts with heterodimer GPHA2:GPHB5; this interaction stimulates cAMP production. Interacts (via the PDZ-binding motif) with SCRIB; regulates TSHR trafficking and function. In terms of processing, glycosylated. Sulfated. Sulfation on Tyr-385 plays a role in thyrotropin receptor binding and activation.

The protein localises to the cell membrane. It is found in the basolateral cell membrane. In terms of biological role, receptor for the thyroid-stimulating hormone (TSH) or thyrotropin. Also acts as a receptor for the heterodimeric glycoprotein hormone (GPHA2:GPHB5) or thyrostimulin. The activity of this receptor is mediated by G proteins which activate adenylate cyclase. Plays a central role in controlling thyroid cell metabolism. In Mus musculus (Mouse), this protein is Thyrotropin receptor (Tshr).